The following is a 320-amino-acid chain: Ferrochelatase (320 aa).

The Fe cation site is built by histidine 194 and glutamate 275.

This sequence belongs to the ferrochelatase family. In terms of assembly, monomer.

The protein localises to the cytoplasm. It carries out the reaction heme b + 2 H(+) = protoporphyrin IX + Fe(2+). It participates in porphyrin-containing compound metabolism; protoheme biosynthesis; protoheme from protoporphyrin-IX: step 1/1. In terms of biological role, catalyzes the ferrous insertion into protoporphyrin IX. In Shigella dysenteriae serotype 1 (strain Sd197), this protein is Ferrochelatase.